The chain runs to 188 residues: Pyridoxal 5'-phosphate synthase subunit PdxT (188 aa).

Position 46 to 48 (46 to 48) interacts with L-glutamine; sequence GES. Cysteine 78 acts as the Nucleophile in catalysis. Residues arginine 105 and 134 to 135 contribute to the L-glutamine site; that span reads IR. Catalysis depends on charge relay system residues histidine 170 and glutamate 172.

Belongs to the glutaminase PdxT/SNO family. In terms of assembly, in the presence of PdxS, forms a dodecamer of heterodimers. Only shows activity in the heterodimer.

It carries out the reaction aldehydo-D-ribose 5-phosphate + D-glyceraldehyde 3-phosphate + L-glutamine = pyridoxal 5'-phosphate + L-glutamate + phosphate + 3 H2O + H(+). It catalyses the reaction L-glutamine + H2O = L-glutamate + NH4(+). It functions in the pathway cofactor biosynthesis; pyridoxal 5'-phosphate biosynthesis. In terms of biological role, catalyzes the hydrolysis of glutamine to glutamate and ammonia as part of the biosynthesis of pyridoxal 5'-phosphate. The resulting ammonia molecule is channeled to the active site of PdxS. The polypeptide is Pyridoxal 5'-phosphate synthase subunit PdxT (Thermotoga maritima (strain ATCC 43589 / DSM 3109 / JCM 10099 / NBRC 100826 / MSB8)).